Consider the following 221-residue polypeptide: Extracellular superoxide dismutase [Cu-Zn] (221 aa).

The first 19 residues, 1-19 (MKTRVVLILALSVCIEAAS), serve as a signal peptide directing secretion. N-linked (GlcNAc...) asparagine glycosylation is present at asparagine 56. Positions 70, 72, and 87 each coordinate Cu cation. An intrachain disulfide couples cysteine 81 to cysteine 170. Histidine 87, histidine 95, histidine 104, and aspartate 107 together coordinate Zn(2+). Histidine 144 serves as a coordination point for Cu cation.

The protein belongs to the Cu-Zn superoxide dismutase family. The cofactor is Cu cation. Requires Zn(2+) as cofactor. In terms of tissue distribution, isoform 2 is preferentially expressed in eggs.

The protein resides in the secreted. It localises to the extracellular space. It is found in the membrane. The enzyme catalyses 2 superoxide + 2 H(+) = H2O2 + O2. Protects cells against oxidative stress by converting superoxide radicals to hydrogen peroxide. Oxidative stress is involved in various biological dysfunctions and senescence. The chain is Extracellular superoxide dismutase [Cu-Zn] (sod-4) from Caenorhabditis elegans.